A 262-amino-acid polypeptide reads, in one-letter code: Small ribosomal subunit protein eS1 (262 aa).

The protein belongs to the eukaryotic ribosomal protein eS1 family. Component of the small ribosomal subunit. Mature ribosomes consist of a small (40S) and a large (60S) subunit. The 40S subunit contains about 33 different proteins and 1 molecule of RNA (18S). The 60S subunit contains about 49 different proteins and 3 molecules of RNA (25S, 5.8S and 5S).

It localises to the cytoplasm. This is Small ribosomal subunit protein eS1 from Plasmodium knowlesi (strain H).